The chain runs to 275 residues: Protein unc-50 homolog (275 aa).

The span at 1–26 (MTQYSHVKYTQSPTPSVVSGYSSASR) shows a compositional bias: polar residues. Residues 1-39 (MTQYSHVKYTQSPTPSVVSGYSSASRLHSPLPPPANHRR) form a disordered region. Topologically, residues 1–99 (MTQYSHVKYT…TKSQFARDDP (99 aa)) are cytoplasmic. Residues 100-120 (AFLVLLVVCLCVTSLGFAYVL) traverse the membrane as a helical segment. Topologically, residues 121 to 129 (GLSFWQSIS) are lumenal. A helical transmembrane segment spans residues 130-150 (FIFYVVFVDCIFVGIIIASFF). Over 151–178 (WAVTNRYLRTNSLEPDIEWGYAFDVHLN) the chain is Cytoplasmic. The chain crosses the membrane as a helical span at residues 179–199 (AFFPPLMLLHFIQLFFYNWLI). The Lumenal segment spans residues 200–207 (SQTWFISR). Residues 208–228 (FLGNTFWLMGMGYYVYITFLG) form a helical membrane-spanning segment. At 229-239 (YNCIPHLKNTR) the chain is on the cytoplasmic side. A helical membrane pass occupies residues 240–260 (IILIALPIIFLLFLVVTIIGW). Over 261-275 (NATISFVNFYKYRVY) the chain is Lumenal.

Belongs to the unc-50 family.

The protein resides in the golgi apparatus membrane. Required for cell surface expression of acetylcholine receptors. This is Protein unc-50 homolog from Drosophila melanogaster (Fruit fly).